The chain runs to 354 residues: Protein-arginine kinase (354 aa).

A Phosphagen kinase C-terminal domain is found at 24-254 (IVLSSRIRLA…QQIIQQEKMA (231 aa)). Residues 27–31 (SSRIR), histidine 92, arginine 125, 176–180 (RASVM), and 207–212 (RGIYGE) each bind ATP. An RDXXRA motif of the pArg binding pocket involved in allosteric regulation motif is present at residues 337 to 342 (RDYRRA).

It belongs to the ATP:guanido phosphotransferase family.

The enzyme catalyses L-arginyl-[protein] + ATP = N(omega)-phospho-L-arginyl-[protein] + ADP + H(+). Appears to be allosterically activated by the binding of pArg-containing polypeptides to the pArg-binding pocket localized in the C-terminal domain of McsB. Catalyzes the specific phosphorylation of arginine residues in a large number of proteins. Is part of the bacterial stress response system. Protein arginine phosphorylation has a physiologically important role and is involved in the regulation of many critical cellular processes, such as protein homeostasis, motility, competence, and stringent and stress responses, by regulating gene expression and protein activity. This Bacillus cereus (strain AH187) protein is Protein-arginine kinase.